The sequence spans 276 residues: uncharacterized protein (276 aa).

The protein to E.coli YjfZ.

This is an uncharacterized protein from Escherichia coli (strain K12).